The following is a 79-amino-acid chain: Probable Fe(2+)-trafficking protein (79 aa).

It belongs to the Fe(2+)-trafficking protein family. As to quaternary structure, monomer.

Could be a mediator in iron transactions between iron acquisition and iron-requiring processes, such as synthesis and/or repair of Fe-S clusters in biosynthetic enzymes. This Blochmanniella floridana protein is Probable Fe(2+)-trafficking protein.